The chain runs to 414 residues: Esterase FrsA (414 aa).

Belongs to the FrsA family.

It carries out the reaction a carboxylic ester + H2O = an alcohol + a carboxylate + H(+). In terms of biological role, catalyzes the hydrolysis of esters. This is Esterase FrsA from Klebsiella pneumoniae (strain 342).